The sequence spans 678 residues: NADPH--cytochrome P450 reductase (678 aa).

An N-acetylglycine modification is found at G2. Residues 2 to 22 are Lumenal-facing; that stretch reads GDSHEDTSATMPEAVAEEVSL. The helical transmembrane segment at 23–43 threads the bilayer; the sequence is FSTTDMVLFSLIVGVLTYWFI. Residues 44–678 are Cytoplasmic-facing; sequence FRKKKEEIPE…KGRYSLDVWS (635 aa). One can recognise a Flavodoxin-like domain in the interval 80–224; the sequence is IIVFYGSQTG…DFITWREQFW (145 aa). FMN-binding positions include 86–91, 138–141, 173–182, and D208; these read SQTGTA, ATYG, and LGNKTYEHFN. Positions 279-521 constitute an FAD-binding FR-type domain; sequence KNPFLAAVTA…FVRKSQFRLP (243 aa). An NADP(+)-binding site is contributed by R298. FAD-binding positions include R424, 454–457, 472–474, Y478, and 488–491; these read RYYS, CAV, and GVAT. Residues T535, 596 to 597, 602 to 606, and D639 each bind NADP(+); these read SR and KVYVQ. W677 provides a ligand contact to FAD.

This sequence belongs to the NADPH--cytochrome P450 reductase family. The protein in the N-terminal section; belongs to the flavodoxin family. In the C-terminal section; belongs to the flavoprotein pyridine nucleotide cytochrome reductase family. It depends on FAD as a cofactor. The cofactor is FMN.

Its subcellular location is the endoplasmic reticulum membrane. The catalysed reaction is 2 oxidized [cytochrome P450] + NADPH = 2 reduced [cytochrome P450] + NADP(+) + H(+). This enzyme is required for electron transfer from NADP to cytochrome P450 in microsomes. It can also provide electron transfer to heme oxygenase and cytochrome B5. The protein is NADPH--cytochrome P450 reductase of Rattus norvegicus (Rat).